Here is a 288-residue protein sequence, read N- to C-terminus: ATP synthase gamma chain (288 aa).

This sequence belongs to the ATPase gamma chain family. In terms of assembly, F-type ATPases have 2 components, CF(1) - the catalytic core - and CF(0) - the membrane proton channel. CF(1) has five subunits: alpha(3), beta(3), gamma(1), delta(1), epsilon(1). CF(0) has three main subunits: a, b and c.

It localises to the cell inner membrane. In terms of biological role, produces ATP from ADP in the presence of a proton gradient across the membrane. The gamma chain is believed to be important in regulating ATPase activity and the flow of protons through the CF(0) complex. This chain is ATP synthase gamma chain, found in Chromobacterium violaceum (strain ATCC 12472 / DSM 30191 / JCM 1249 / CCUG 213 / NBRC 12614 / NCIMB 9131 / NCTC 9757 / MK).